A 363-amino-acid chain; its full sequence is S-methylmethionine--homocysteine S-methyltransferase BHMT2 (363 aa).

One can recognise a Hcy-binding domain in the interval 11–305 (KGILERLDSG…YHIRAIAEEL (295 aa)). 3 residues coordinate Zn(2+): Cys208, Cys290, and Cys291. Ser321 bears the Phosphoserine mark.

Homotetramer. Zn(2+) is required as a cofactor. Expressed in fetal heart, lung, liver, kidney and eye.

The enzyme catalyses S-methyl-L-methionine + L-homocysteine = 2 L-methionine + H(+). The protein operates within amino-acid biosynthesis; L-methionine biosynthesis via de novo pathway; L-methionine from L-homocysteine (BhmT route): step 1/1. Involved in the regulation of homocysteine metabolism. Converts homocysteine to methionine using S-methylmethionine (SMM) as a methyl donor. The polypeptide is S-methylmethionine--homocysteine S-methyltransferase BHMT2 (Bhmt2) (Mus musculus (Mouse)).